The chain runs to 59 residues: Potassium channel toxin alpha-KTx 3.5 (59 aa).

Residues 1-22 (MKVFSAVLIILFVCSMIIGINA) form the signal peptide. 3 disulfide bridges follow: Cys29-Cys49, Cys35-Cys54, and Cys39-Cys56. An interaction with Ca(2+)-activated K(+) channels region spans residues 47 to 54 (GKCMNGKC).

Belongs to the short scorpion toxin superfamily. Potassium channel inhibitor family. Alpha-KTx 03 subfamily. In terms of tissue distribution, expressed by the venom gland.

The protein localises to the secreted. In terms of biological role, has also been shown to inhibit with high potency Kv1.3/KCNA3 and with low potency Kv1.1/KCNA1 and Kv1.2/KCNA2 voltage-gated potassium channels. Also binds and inhibits the molluscan calcium-activated potassium channels KCa (Kd=135 nM). The chain is Potassium channel toxin alpha-KTx 3.5 (KTX2) from Androctonus australis (Sahara scorpion).